Consider the following 64-residue polypeptide: uncharacterized protein (64 aa).

The next 2 membrane-spanning stretches (helical) occupy residues 4–24 (IYQY…WLAY) and 35–55 (MYLN…TFGM).

Its subcellular location is the cell membrane. This is an uncharacterized protein from Bacillus subtilis (strain 168).